Here is a 197-residue protein sequence, read N- to C-terminus: Nucleoside triphosphate pyrophosphatase (197 aa).

Catalysis depends on Asp-71, which acts as the Proton acceptor.

Belongs to the Maf family. It depends on a divalent metal cation as a cofactor.

It localises to the cytoplasm. The catalysed reaction is a ribonucleoside 5'-triphosphate + H2O = a ribonucleoside 5'-phosphate + diphosphate + H(+). The enzyme catalyses a 2'-deoxyribonucleoside 5'-triphosphate + H2O = a 2'-deoxyribonucleoside 5'-phosphate + diphosphate + H(+). In terms of biological role, nucleoside triphosphate pyrophosphatase. May have a dual role in cell division arrest and in preventing the incorporation of modified nucleotides into cellular nucleic acids. The polypeptide is Nucleoside triphosphate pyrophosphatase (Synechococcus sp. (strain JA-2-3B'a(2-13)) (Cyanobacteria bacterium Yellowstone B-Prime)).